The following is a 152-amino-acid chain: UPF0756 membrane protein JDM1_1594 (152 aa).

The next 4 membrane-spanning stretches (helical) occupy residues 25 to 45, 52 to 72, 85 to 105, and 115 to 135; these read ATVV…LTTI, WGVT…QIGF, WIAV…VGLL, and LVFG…GPII.

The protein belongs to the UPF0756 family.

The protein resides in the cell membrane. The sequence is that of UPF0756 membrane protein JDM1_1594 from Lactiplantibacillus plantarum (strain JDM1) (Lactobacillus plantarum).